The sequence spans 106 residues: Nucleoid-associated protein RPB_0667 (106 aa).

Belongs to the YbaB/EbfC family. In terms of assembly, homodimer.

It localises to the cytoplasm. It is found in the nucleoid. In terms of biological role, binds to DNA and alters its conformation. May be involved in regulation of gene expression, nucleoid organization and DNA protection. The polypeptide is Nucleoid-associated protein RPB_0667 (Rhodopseudomonas palustris (strain HaA2)).